The following is a 188-amino-acid chain: Elongation factor P (188 aa).

Belongs to the elongation factor P family.

It localises to the cytoplasm. The protein operates within protein biosynthesis; polypeptide chain elongation. Its function is as follows. Involved in peptide bond synthesis. Stimulates efficient translation and peptide-bond synthesis on native or reconstituted 70S ribosomes in vitro. Probably functions indirectly by altering the affinity of the ribosome for aminoacyl-tRNA, thus increasing their reactivity as acceptors for peptidyl transferase. This Methylobacterium radiotolerans (strain ATCC 27329 / DSM 1819 / JCM 2831 / NBRC 15690 / NCIMB 10815 / 0-1) protein is Elongation factor P.